The following is a 233-amino-acid chain: Antiholin-like protein LrgB (233 aa).

7 helical membrane-spanning segments follow: residues 9–29, 34–54, 63–83, 97–117, 121–141, 144–164, and 212–232; these read TPYFGILLSVIPFFLATILFE, FFLFAPLFVSMVFGVAFLYLT, IGGDIIYFFLEPATICFAIPL, IIGGIGIGTVVALLIILTFAK, FANDVILSMLPQAATTAIALP, AGIGGIKELTSLAVILNGVII, and IALVLVGVVVVAVVPVFVAIF.

It belongs to the CidB/LrgB family. LrgB subfamily.

The protein localises to the cell membrane. Functionally, inhibits the expression or activity of extracellular murein hydrolases by interacting, possibly with LrgA, with the holin-like proteins CidA and/or CidB. The LrgAB and CidAB proteins may affect the proton motive force of the membrane. May be involved in programmed cell death (PCD), possibly triggering PCD in response to antibiotics and environmental stresses. The chain is Antiholin-like protein LrgB from Staphylococcus aureus (strain Mu3 / ATCC 700698).